Here is a 307-residue protein sequence, read N- to C-terminus: MANITAAMVKDLRESTGAGMMDCKAALTETGGDMQAAQDWLRKKGLSKAAKKAGRVAAEGLIGALTSGKKGVVVEVNSETDFVARNEHFQGLVKMIAQVALDVGADVEKIKAAKVGSITVEAAIADSIATIGENQSLRRAAALEVSEGVVASYVHGAVIEGAGKLGVIVALESPGKTDELAALGRQLAMHVAAANPQAIDAAGLDPEVVKREKDVLSDKYRQQGKPENVIEKIVESGLKTYYKEVTLLEQAFIHDSGKSVAQALKEAEGKVGGPIKVAGFVRYALGEGIEKEETDFAAEVAAASGKK.

Positions 80 to 83 (TDFV) are involved in Mg(2+) ion dislocation from EF-Tu.

Belongs to the EF-Ts family.

Its subcellular location is the cytoplasm. Functionally, associates with the EF-Tu.GDP complex and induces the exchange of GDP to GTP. It remains bound to the aminoacyl-tRNA.EF-Tu.GTP complex up to the GTP hydrolysis stage on the ribosome. The polypeptide is Elongation factor Ts (Bradyrhizobium sp. (strain ORS 278)).